Here is a 652-residue protein sequence, read N- to C-terminus: Forkhead box protein O1-A (652 aa).

3 disordered regions span residues 1-57 (MADA…EPSS), 208-277 (SSWW…NSHS), and 359-406 (NLLS…QQTQ). Over residues 41–57 (DSNTSSPAPSVKQEPSS) the composition is skewed to polar residues. The fork-head DNA-binding region spans 134–228 (WGNMSYADLI…KSGKSPRRRA (95 aa)). The segment covering 238-249 (AKSRGRAAKKKL) has biased composition (basic residues). Residues 362–397 (SPKNPSTGGPGSGSNQSSPSSLMQASPGYSPYSSPG) show a composition bias toward low complexity.

It is found in the cytoplasm. The protein localises to the nucleus. Transcription factor that regulates metabolic homeostasis in response to oxidative stress. Binds to the consensus sequence 5'-TT[G/A]TTTTG-3' and the related Daf-16 family binding element (DBE) with consensus sequence 5'-TT[G/A]TTTAC-3'. Main regulator of redox balance and osteoblast numbers and controls bone mass. Orchestrates the endocrine function of the skeleton in regulating glucose metabolism. May be involved in regulating cellular homeostasis in the eye. May act as a positive regulator of apoptosis in cardiac smooth muscle cells as a result of its transcriptional activation of pro-apoptotic genes. This is Forkhead box protein O1-A (foxo1a) from Danio rerio (Zebrafish).